The following is a 997-amino-acid chain: Autophagy-related protein 9 (997 aa).

Topologically, residues 1-318 are cytoplasmic; the sequence is MERDEYQLPN…DVYNYYLGNG (318 aa). Serine 19 carries the phosphoserine; by ATG1 modification. Residues 29-39 show a composition bias toward polar residues; the sequence is VNPSLNSQEMS. The interval 29–88 is disordered; that stretch reads VNPSLNSQEMSNFPLPDIERGSSLLHSTNDSREDVDENDLRVPESDQGTSTEEEDEVDEE. Positions 79-88 are enriched in acidic residues; the sequence is TEEEDEVDEE. Glycyl lysine isopeptide (Lys-Gly) (interchain with G-Cter in ubiquitin) cross-links involve residues lysine 113 and lysine 121. Serine 122 bears the Phosphoserine mark. Disordered stretches follow at residues 128 to 159 and 213 to 235; these read VEGS…DGFD and IHHD…QKHG. Residue lysine 138 forms a Glycyl lysine isopeptide (Lys-Gly) (interchain with G-Cter in ubiquitin) linkage. 2 positions are modified to phosphoserine: serine 143 and serine 144. Residues 144–159 are compositionally biased toward acidic residues; the sequence is SEEEEDNEFINNDGFD. Residues 221 to 233 show a composition bias toward polar residues; it reads ANNGPRNINGNQK. The chain crosses the membrane as a helical span at residues 319 to 339; the sequence is FYCIILEKILNICTLLFVVFV. The Lumenal portion of the chain corresponds to 340–376; the sequence is STYMGHCVDYSKLPTSHRVSDIIIDKCYSNSITGFTK. Residues 377 to 397 form a helical membrane-spanning segment; it reads FFLWMFYFFVILKIVQLYFDV. The Cytoplasmic portion of the chain corresponds to 398–538; that stretch reads QKLSELQNFY…EELQKRFMLA (141 aa). Residues 539–559 lie within the membrane without spanning it; the sequence is GFLNIILAPFLVTYFVLLYFF. Residues 560-620 are Cytoplasmic-facing; the sequence is RYFNEYKTSP…DQFPKEKTNL (61 aa). Residues 621–641 traverse the membrane as a helical segment; the sequence is FLKFVSFICGSFVAILAFLTV. Residues 642-656 lie on the Lumenal side of the membrane; that stretch reads FDPENFLNFEITSDR. The residue at position 657 (serine 657) is a Phosphoserine; by ATG1. The helical transmembrane segment at 657 to 677 threads the bilayer; sequence SVIFYITILGAIWSVSRNTIT. The Cytoplasmic portion of the chain corresponds to 678–723; it reads QEYHVFDPEETLKELYEYTHYLPKEWEGRYHKEEIKLEFCKLYNLR. Lysine 701 is covalently cross-linked (Glycyl lysine isopeptide (Lys-Gly) (interchain with G-Cter in ubiquitin)). The stretch at 724 to 744 is an intramembrane region; it reads IVILLRELTSLMITPFVLWFS. Residues 745-997 are Cytoplasmic-facing; the sequence is LPSSAGRIVD…EYYKKSDVGR (253 aa). A phosphoserine mark is found at serine 787 and serine 792. Phosphothreonine is present on threonine 794. Residue serine 802 is modified to Phosphoserine; by ATG1. Threonine 804 bears the Phosphothreonine; by ATG1 mark. Phosphoserine; by ATG1 is present on residues serine 831 and serine 842. Phosphoserine is present on serine 864. Phosphoserine; by ATG1 is present on residues serine 948 and serine 969.

This sequence belongs to the ATG9 family. As to quaternary structure, homotrimer; forms a homotrimer with a central pore that forms a path between the two membrane leaflets. Interacts with ATG23 and ATG27 to form a cycling complex for trafficking to the PAS. Interacts (via N-terminus) with ATG11, required for recruitment of ATG9 to the PAS for the Cvt pathway during nutrient-rich conditions. Interacts (via N-terminus) with ATG17; required for recruitment to the PAS during autophagy and starved conditions. Interacts with ATG2 and ATG18; required for the retrieval of ATG9 from the PAS to the cytoplasmic pool. Interacts with ATG41. Interacts with the conserved oligomeric Golgi (COG) complex subunits COG3 and COG4. Interacts with TRS85. Post-translationally, phosphorylated by ATG1; phosphorylation is required for autophagy and cytoplasm to vacuole transport (Cvt) vesicle formation. Phosphorylation by ATG1 regulates ATG18 interaction and preautophagosome elongation. Phosphorylation at Ser-122 is required for selective autophagy by regulating anterograde trafficking and interaction with ATG23 and ATG27. Phosphorylation at Ser-122 prevents ubiquitination by the SCF(MET30) complex. Ubiquitinated by the SCF(MET30) complex in normal conditions, leading to its degradation by the proteasome, thereby preventing inappropriate induction of autophagy. Ubiquitination by the SCF(MET30) complex is prevented by phosphorylation at Ser-122.

The protein localises to the preautophagosomal structure membrane. The protein resides in the cytoplasmic vesicle membrane. It is found in the golgi apparatus membrane. It localises to the endoplasmic reticulum membrane. Its subcellular location is the mitochondrion membrane. It catalyses the reaction a 1,2-diacyl-sn-glycero-3-phosphocholine(in) = a 1,2-diacyl-sn-glycero-3-phosphocholine(out). The enzyme catalyses a 1,2-diacyl-sn-glycero-3-phospho-L-serine(in) = a 1,2-diacyl-sn-glycero-3-phospho-L-serine(out). It carries out the reaction a 1,2-diacyl-sn-glycero-3-phosphoethanolamine(in) = a 1,2-diacyl-sn-glycero-3-phosphoethanolamine(out). The catalysed reaction is a 1,2-diacyl-sn-glycero-3-phospho-(1D-myo-inositol-3-phosphate)(in) = a 1,2-diacyl-sn-glycero-3-phospho-(1D-myo-inositol-3-phosphate)(out). Phospholipid scramblase involved in autophagy and cytoplasm to vacuole transport (Cvt) vesicle formation. Cycles between the preautophagosomal structure/phagophore assembly site (PAS) and the cytoplasmic vesicle pool and supplies membrane for the growing autophagosome. Lipid scramblase activity plays a key role in preautophagosomal structure/phagophore assembly by distributing the phospholipids that arrive through ATG2 from the cytoplasmic to the luminal leaflet of the bilayer, thereby driving autophagosomal membrane expansion. Required for mitophagy. Also involved in endoplasmic reticulum-specific autophagic process and is essential for the survival of cells subjected to severe ER stress. Recruits vesicle-tethering proteins TRS85 and YPT1 to the autophagosome formation site. Also recruits ATG23 and ATG8 to the PAS. The sequence is that of Autophagy-related protein 9 from Saccharomyces cerevisiae (strain ATCC 204508 / S288c) (Baker's yeast).